A 455-amino-acid polypeptide reads, in one-letter code: MRKIPNHGTLRMTKVAYPLGLCVGLFIYVAYIKWHRASAAQAFFTIAGAASGARWTQQAFSSPGSAARGHEVFYGIMFDAGSTGTRIHVFQFARPPGETPTLTHETFKALKPGLSAYADDVEKSAQGIQELLNVAKQHIPYDFWKATPLVLKATAGLRLLPGEKAQKLLQKVKEVFKASPFLVGDDCVSIMNGTDEGVSAWITVNFLTGSLKTPGSSSVGMLDLGGGSTQITFLPRVEGTLQASPPGHLTALQMFNRTYKLYSYSYLGLGLMSARLAILGGVEGKPAENDKELVSPCLSPRFRGEWEHAEVTYRISGQKAVGLYELCASRVSEVLRNKVHRTEEAQHVDFYAFSYYYDLAASFGLIDAEKGGSLVVGDFEIAAKYVCRTLETQPPSSPFACMDLTYISLLLHEFGFPGDKVLKLARKIDNVETSWALGAIFHYIDSLKRQKVPAL.

The Cytoplasmic segment spans residues 1–12 (MRKIPNHGTLRM). The helical transmembrane segment at 13 to 32 (TKVAYPLGLCVGLFIYVAYI) threads the bilayer. The Lumenal segment spans residues 33–455 (KWHRASAAQA…SLKRQKVPAL (423 aa)). Glu196 serves as the catalytic Proton acceptor. 2 cysteine pairs are disulfide-bonded: Cys297–Cys327 and Cys387–Cys401.

It belongs to the GDA1/CD39 NTPase family. Mg(2+) is required as a cofactor. The cofactor is Ca(2+). In terms of processing, N-glycosylated.

It is found in the golgi apparatus membrane. It localises to the secreted. The protein localises to the cell membrane. It catalyses the reaction a ribonucleoside 5'-diphosphate + H2O = a ribonucleoside 5'-phosphate + phosphate + H(+). The enzyme catalyses IDP + H2O = IMP + phosphate + H(+). It carries out the reaction GDP + H2O = GMP + phosphate + H(+). The catalysed reaction is UDP + H2O = UMP + phosphate + H(+). Its function is as follows. Catalyzes the hydrolysis of nucleoside triphosphates and diphosphates in a calcium- or magnesium-dependent manner. Has a strong preference for nucleoside diphosphates, preferentially hydrolyzes GDP, IDP, and UDP, with slower hydrolysis of CDP, ITP, GTP, CTP, ADP, and UTP and virtually no hydrolysis of ATP. The membrane bound form might support glycosylation reactions in the Golgi apparatus and, when released from cells, might catalyze the hydrolysis of extracellular nucleotides. This chain is Ectonucleoside triphosphate diphosphohydrolase 6, found in Mus musculus (Mouse).